Reading from the N-terminus, the 301-residue chain is Tyrosine recombinase XerD (301 aa).

The 84-residue stretch at 6-89 (PLHQQLIEQF…ALKVFFHFLK (84 aa)) folds into the Core-binding (CB) domain. The Tyr recombinase domain occupies 108 to 293 (RLPSILSTEE…ASESIIEKFH (186 aa)). Catalysis depends on residues Arg-152, Lys-174, His-245, Arg-248, and His-271. The active-site O-(3'-phospho-DNA)-tyrosine intermediate is the Tyr-280.

The protein belongs to the 'phage' integrase family. XerD subfamily. Forms a cyclic heterotetrameric complex composed of two molecules of XerC and two molecules of XerD.

The protein resides in the cytoplasm. Its function is as follows. Site-specific tyrosine recombinase, which acts by catalyzing the cutting and rejoining of the recombining DNA molecules. The XerC-XerD complex is essential to convert dimers of the bacterial chromosome into monomers to permit their segregation at cell division. It also contributes to the segregational stability of plasmids. This is Tyrosine recombinase XerD from Chlamydia muridarum (strain MoPn / Nigg).